A 256-amino-acid polypeptide reads, in one-letter code: Hydroxyacylglutathione hydrolase (256 aa).

Positions 55, 57, 59, 60, 113, 130, and 168 each coordinate Zn(2+).

Belongs to the metallo-beta-lactamase superfamily. Glyoxalase II family. In terms of assembly, monomer. Zn(2+) is required as a cofactor.

It carries out the reaction an S-(2-hydroxyacyl)glutathione + H2O = a 2-hydroxy carboxylate + glutathione + H(+). It functions in the pathway secondary metabolite metabolism; methylglyoxal degradation; (R)-lactate from methylglyoxal: step 2/2. Thiolesterase that catalyzes the hydrolysis of S-D-lactoyl-glutathione to form glutathione and D-lactic acid. The protein is Hydroxyacylglutathione hydrolase of Psychromonas ingrahamii (strain DSM 17664 / CCUG 51855 / 37).